Reading from the N-terminus, the 511-residue chain is 2,3-bisphosphoglycerate-independent phosphoglycerate mutase (511 aa).

Residues D12 and S62 each coordinate Mn(2+). S62 (phosphoserine intermediate) is an active-site residue. Residues H123, 153–154, R185, R191, 260–263, and K335 contribute to the substrate site; these read RD and RPDR. 5 residues coordinate Mn(2+): D402, H406, D443, H444, and H462.

The protein belongs to the BPG-independent phosphoglycerate mutase family. As to quaternary structure, monomer. It depends on Mn(2+) as a cofactor.

It carries out the reaction (2R)-2-phosphoglycerate = (2R)-3-phosphoglycerate. The protein operates within carbohydrate degradation; glycolysis; pyruvate from D-glyceraldehyde 3-phosphate: step 3/5. In terms of biological role, catalyzes the interconversion of 2-phosphoglycerate and 3-phosphoglycerate. This is 2,3-bisphosphoglycerate-independent phosphoglycerate mutase from Acetivibrio thermocellus (strain ATCC 27405 / DSM 1237 / JCM 9322 / NBRC 103400 / NCIMB 10682 / NRRL B-4536 / VPI 7372) (Clostridium thermocellum).